The following is a 542-amino-acid chain: DM7 family protein CG15333 (542 aa).

Belongs to the DM7 family.

This Drosophila melanogaster (Fruit fly) protein is DM7 family protein CG15333.